We begin with the raw amino-acid sequence, 384 residues long: Anhydro-N-acetylmuramic acid kinase (384 aa).

12-19 (GTSLDGVD) contacts ATP.

This sequence belongs to the anhydro-N-acetylmuramic acid kinase family.

The catalysed reaction is 1,6-anhydro-N-acetyl-beta-muramate + ATP + H2O = N-acetyl-D-muramate 6-phosphate + ADP + H(+). It participates in amino-sugar metabolism; 1,6-anhydro-N-acetylmuramate degradation. It functions in the pathway cell wall biogenesis; peptidoglycan recycling. Functionally, catalyzes the specific phosphorylation of 1,6-anhydro-N-acetylmuramic acid (anhMurNAc) with the simultaneous cleavage of the 1,6-anhydro ring, generating MurNAc-6-P. Is required for the utilization of anhMurNAc either imported from the medium or derived from its own cell wall murein, and thus plays a role in cell wall recycling. The polypeptide is Anhydro-N-acetylmuramic acid kinase (Cronobacter sakazakii (strain ATCC BAA-894) (Enterobacter sakazakii)).